A 60-amino-acid chain; its full sequence is Large ribosomal subunit protein bL32 (60 aa).

Positions 1–43 (MAVQQNRKTRSRRGMRRSHDALTGKTLSVDSTTGEKHLRHHVT) are disordered. Positions 7 to 16 (RKTRSRRGMR) are enriched in basic residues.

Belongs to the bacterial ribosomal protein bL32 family.

The polypeptide is Large ribosomal subunit protein bL32 (Saccharophagus degradans (strain 2-40 / ATCC 43961 / DSM 17024)).